Reading from the N-terminus, the 279-residue chain is Diaminopimelate epimerase (279 aa).

Substrate-binding residues include Asn11 and Asn63. Cys72 (proton donor) is an active-site residue. Substrate is bound by residues 73-74 (GN), Asn161, Asn194, and 212-213 (ER). Cys221 (proton acceptor) is an active-site residue. Residue 222–223 (GT) coordinates substrate.

It belongs to the diaminopimelate epimerase family. Homodimer.

Its subcellular location is the cytoplasm. The enzyme catalyses (2S,6S)-2,6-diaminopimelate = meso-2,6-diaminopimelate. It functions in the pathway amino-acid biosynthesis; L-lysine biosynthesis via DAP pathway; DL-2,6-diaminopimelate from LL-2,6-diaminopimelate: step 1/1. Its function is as follows. Catalyzes the stereoinversion of LL-2,6-diaminopimelate (L,L-DAP) to meso-diaminopimelate (meso-DAP), a precursor of L-lysine and an essential component of the bacterial peptidoglycan. In Moorella thermoacetica (strain ATCC 39073 / JCM 9320), this protein is Diaminopimelate epimerase.